The primary structure comprises 250 residues: Ubiquinone/menaquinone biosynthesis C-methyltransferase UbiE (250 aa).

Residues threonine 74, aspartate 94, 122-123 (DA), and serine 139 each bind S-adenosyl-L-methionine.

The protein belongs to the class I-like SAM-binding methyltransferase superfamily. MenG/UbiE family.

The catalysed reaction is a 2-demethylmenaquinol + S-adenosyl-L-methionine = a menaquinol + S-adenosyl-L-homocysteine + H(+). It carries out the reaction a 2-methoxy-6-(all-trans-polyprenyl)benzene-1,4-diol + S-adenosyl-L-methionine = a 5-methoxy-2-methyl-3-(all-trans-polyprenyl)benzene-1,4-diol + S-adenosyl-L-homocysteine + H(+). It participates in quinol/quinone metabolism; menaquinone biosynthesis; menaquinol from 1,4-dihydroxy-2-naphthoate: step 2/2. It functions in the pathway cofactor biosynthesis; ubiquinone biosynthesis. In terms of biological role, methyltransferase required for the conversion of demethylmenaquinol (DMKH2) to menaquinol (MKH2) and the conversion of 2-polyprenyl-6-methoxy-1,4-benzoquinol (DDMQH2) to 2-polyprenyl-3-methyl-6-methoxy-1,4-benzoquinol (DMQH2). This chain is Ubiquinone/menaquinone biosynthesis C-methyltransferase UbiE, found in Ruegeria sp. (strain TM1040) (Silicibacter sp.).